We begin with the raw amino-acid sequence, 231 residues long: 2-phospho-L-lactate guanylyltransferase (231 aa).

It belongs to the CofC family. In terms of assembly, homodimer.

The catalysed reaction is (2S)-2-phospholactate + GTP + H(+) = (2S)-lactyl-2-diphospho-5'-guanosine + diphosphate. It functions in the pathway cofactor biosynthesis; coenzyme F420 biosynthesis. Its function is as follows. Guanylyltransferase that catalyzes the activation of (2S)-2-phospholactate (2-PL) as (2S)-lactyl-2-diphospho-5'-guanosine, via the condensation of 2-PL with GTP. It is involved in the biosynthesis of coenzyme F420, a hydride carrier cofactor. The chain is 2-phospho-L-lactate guanylyltransferase from Haloterrigena turkmenica (strain ATCC 51198 / DSM 5511 / JCM 9101 / NCIMB 13204 / VKM B-1734 / 4k) (Halococcus turkmenicus).